Reading from the N-terminus, the 518-residue chain is Cytochrome P450 monooxygenase pyr3 (518 aa).

A helical membrane pass occupies residues 26-46 (GVAIVLFLAPLALHLVSSYLF). Position 458 (cysteine 458) interacts with heme.

This sequence belongs to the cytochrome P450 family. Heme is required as a cofactor.

The protein localises to the membrane. It functions in the pathway secondary metabolite biosynthesis; terpenoid biosynthesis. Cytochrome P450 monooxygenase; part of the gene cluster that mediates the biosynthesis of pyripyropene A, a specific human acyl-coenzyme A:cholesterol acyltransferase 2 inhibitor. The first step of the pathway is the synthesis of nicotinyl-CoA from nicotinic acid by the nicotinic acid-CoA ligase pyr1. Nicotinyl-CoA is then a substrate of polyketide synthase pyr2 to produce 4-hydroxy-6-(3-pyridinyl)-2H-pyran-2-one (HPPO) which is further prenylated by the polyprenyl transferase pyr6 to yield farnesyl-HPPO. The next steps consist of an epoxidation of farnesyl-HPPO to epoxyfarnesyl-HPPO by FAD-dependent monooxygenase pyr5 and a cyclization of the terpenoid portion by the terpene cyclase pyr4 to yield deacetyl-pyripyropene E. The 2 cytochrome P450 monooxygenases pyr3 and pyr9, and the 2 acetyltransferases pyr7 and pyr8 are involved in the conversion of deacetyl-pyripyropene E into pyripyropene A through several cycles of oxidation and acetylation steps. Pyr7 acetylates deacetyl-pyripyropene E to pyripyropene E which is oxidized to 11-deacetyl-pyripyropene O by pyr3, which is in turn acetylated into pyripyropene O by pyr8. Pyripyropene O is then oxidized to deacetyl-pyripyropene A by pyr9. Deacetyl-pyripyropene A is finally acetylated to pyripyropene A by pyr8. The polypeptide is Cytochrome P450 monooxygenase pyr3 (Aspergillus fumigatus (strain ATCC MYA-4609 / CBS 101355 / FGSC A1100 / Af293) (Neosartorya fumigata)).